A 296-amino-acid chain; its full sequence is Cell surface glycoprotein CD200 receptor 3 (296 aa).

A signal peptide spans M1–C25. The Extracellular segment spans residues S26–S245. The Ig-like V-type domain occupies P48–Q162. An intrachain disulfide couples C75 to C146. Residues T151–S232 enclose the Ig-like C2-type domain. 2 N-linked (GlcNAc...) asparagine glycosylation sites follow: N167 and N199. C172 and C220 are oxidised to a cystine. A helical membrane pass occupies residues L246 to F266. Topologically, residues Q267–G296 are cytoplasmic.

This sequence belongs to the CD200R family. Isoform 3 interacts with TYROBP. Isoform 8 does not interact with TYROBP. In terms of tissue distribution, expressed in uterus and bone marrow-derived mast cells (at protein level). Expressed in uterus, spleen, bone marrow-derived dendritic, basophil and mast cells. Expressed in the lung of N.brasiliensis-infected mice. Weakly expressed in brain, testis, lung and thymus.

The protein localises to the membrane. Functionally, according to PubMed:15187158 isoform 4 is a receptor for the CD200 cell surface glycoprotein. According to PubMed:16081818 isoform 4 is not a receptor for the CD200/OX2 cell surface glycoprotein. Isoform 1, isoform 2 and isoform 3 are involved in the recruitment or surface expression of the TYROBP receptor. Isoform 6, isoform 7 and isoform 8 are not involved in the recruitment or surface expression of the TYROBP receptor. This chain is Cell surface glycoprotein CD200 receptor 3 (Cd200r3), found in Mus musculus (Mouse).